We begin with the raw amino-acid sequence, 508 residues long: Steroid 17-alpha-hydroxylase/17,20 lyase (508 aa).

Cysteine 442 serves as a coordination point for heme.

This sequence belongs to the cytochrome P450 family. The cofactor is heme.

The protein resides in the endoplasmic reticulum membrane. Its subcellular location is the microsome membrane. The catalysed reaction is a C21-steroid + reduced [NADPH--hemoprotein reductase] + O2 = a 17alpha-hydroxy-C21-steroid + oxidized [NADPH--hemoprotein reductase] + H2O + H(+). The enzyme catalyses progesterone + reduced [NADPH--hemoprotein reductase] + O2 = 17alpha-hydroxyprogesterone + oxidized [NADPH--hemoprotein reductase] + H2O + H(+). It carries out the reaction pregnenolone + reduced [NADPH--hemoprotein reductase] + O2 = 17alpha-hydroxypregnenolone + oxidized [NADPH--hemoprotein reductase] + H2O + H(+). It catalyses the reaction 17alpha-hydroxyprogesterone + reduced [NADPH--hemoprotein reductase] + O2 = androst-4-ene-3,17-dione + acetate + oxidized [NADPH--hemoprotein reductase] + H2O + 2 H(+). The catalysed reaction is 17alpha-hydroxyprogesterone + reduced [NADPH--hemoprotein reductase] + O2 = 16alpha,17alpha-dihydroxyprogesterone + oxidized [NADPH--hemoprotein reductase] + H2O + H(+). The enzyme catalyses 16alpha,17alpha-dihydroxyprogesterone + reduced [NADPH--hemoprotein reductase] + O2 = 6beta,16alpha,17alpha-trihydroxyprogesterone + oxidized [NADPH--hemoprotein reductase] + H2O + H(+). It carries out the reaction 17alpha-hydroxypregnenolone + reduced [NADPH--hemoprotein reductase] + O2 = 3beta-hydroxyandrost-5-en-17-one + acetate + oxidized [NADPH--hemoprotein reductase] + H2O + 2 H(+). It catalyses the reaction 16alpha,17alpha-dihydroxypregnenolone + reduced [NADPH--hemoprotein reductase] + O2 = 3beta,16alpha-dihydroxy-androst-5-en-17-one + acetate + oxidized [NADPH--hemoprotein reductase] + H2O + 2 H(+). The catalysed reaction is 3beta-hydroxyandrost-5-en-17-one + reduced [NADPH--hemoprotein reductase] + O2 = 3beta,16alpha-dihydroxy-androst-5-en-17-one + oxidized [NADPH--hemoprotein reductase] + H2O + H(+). The enzyme catalyses androst-4-ene-3,17-dione + reduced [NADPH--hemoprotein reductase] + O2 = 16alpha-hydroxyandrost-4-ene-3,17-dione + oxidized [NADPH--hemoprotein reductase] + H2O + H(+). It participates in steroid hormone biosynthesis. Its pathway is steroid biosynthesis; glucocorticoid biosynthesis. With respect to regulation, regulated predominantly by intracellular cAMP levels. The 17,20-lyase activity is stimulated by cytochrome b5, which acts as an allosteric effector increasing the Vmax of the lyase activity. Its function is as follows. A cytochrome P450 monooxygenase involved in corticoid and androgen biosynthesis. Catalyzes 17-alpha hydroxylation of C21 steroids, which is common for both pathways. A second oxidative step, required only for androgen synthesis, involves an acyl-carbon cleavage. The 17-alpha hydroxy intermediates, as part of adrenal glucocorticoids biosynthesis pathway, are precursors of cortisol. Hydroxylates steroid hormones, pregnenolone and progesterone to form 17-alpha hydroxy metabolites, followed by the cleavage of the C17-C20 bond to form C19 steroids, dehydroepiandrosterone (DHEA) and androstenedione. Has 16-alpha hydroxylase activity. Catalyzes 16-alpha hydroxylation of 17-alpha hydroxy pregnenolone, followed by the cleavage of the C17-C20 bond to form 16-alpha-hydroxy DHEA. Also 16-alpha hydroxylates androgens, relevant for estriol synthesis. Mechanistically, uses molecular oxygen inserting one oxygen atom into a substrate, and reducing the second into a water molecule, with two electrons provided by NADPH via cytochrome P450 reductase (CPR; NADPH-ferrihemoprotein reductase). In Cavia porcellus (Guinea pig), this protein is Steroid 17-alpha-hydroxylase/17,20 lyase (CYP17A1).